The sequence spans 536 residues: Beta-hexosaminidase subunit beta (536 aa).

An N-terminal signal peptide occupies residues 1-31 (MPQSPRSAPGLLLLQALVSLVSLALVAPARL). Asn-63 is a glycosylation site (N-linked (GlcNAc...) asparagine). Cysteines 70 and 116 form a disulfide. N-linked (GlcNAc...) asparagine glycosylation is found at Asn-169 and Asn-306. 2 cysteine pairs are disulfide-bonded: Cys-288/Cys-339 and Cys-513/Cys-530. The active-site Proton donor is the Glu-334.

It belongs to the glycosyl hydrolase 20 family. As to quaternary structure, there are 3 forms of beta-hexosaminidase: hexosaminidase A is a heterodimer composed of one subunit alpha and one subunit beta (chain A and B); hexosaminidase B is a homodimer of two beta subunits (two chains A and B); hexosaminidase S is a homodimer of two alpha subunits. The composition of the dimer (isozyme A versus isozyme S) has a significant effect on the substrate specificity of the alpha subunit active site.

The protein resides in the lysosome. The protein localises to the cytoplasmic vesicle. It is found in the secretory vesicle. Its subcellular location is the cortical granule. It catalyses the reaction Hydrolysis of terminal non-reducing N-acetyl-D-hexosamine residues in N-acetyl-beta-D-hexosaminides.. The enzyme catalyses N-acetyl-beta-D-galactosaminyl-(1-&gt;4)-beta-D-3-sulfogalactosyl-(1-&gt;4)-beta-D-glucosyl-(1&lt;-&gt;1')-ceramide + H2O = a beta-D-3-sulfogalactosyl-(1-&gt;4)-beta-D-glucosyl-(1&lt;-&gt;1')-ceramide + N-acetyl-beta-D-galactosamine. It carries out the reaction a ganglioside GM2 (d18:1(4E)) + H2O = a ganglioside GM3 (d18:1(4E)) + N-acetyl-beta-D-galactosamine. The catalysed reaction is a ganglioside GM2 + H2O = a ganglioside GM3 + N-acetyl-beta-D-galactosamine. It catalyses the reaction beta-D-GalNAc-(1-&gt;4)-alpha-L-IdoA-(1-&gt;3)-beta-D-GalNAc-4-sulfate-(1-&gt;4)-alpha-L-IdoA-(1-&gt;3)-D-GalNAc-4-sulfate + H2O = alpha-L-IdoA-(1-&gt;3)-beta-D-GalNAc-4-sulfate-(1-&gt;4)-alpha-L-IdoA-(1-&gt;3)-D-GalNAc-4-sulfate + N-acetyl-D-galactosamine. The enzyme catalyses N-acetyl-beta-D-6-sulfogalactosaminyl-(1-&gt;4)-alpha-L-iduronyl-(1-&gt;3)-N-acetyl-D-6-sulfogalactosamine + H2O = alpha-L-iduronyl-(1-&gt;3)-N-acetyl-D-6-sulfogalactosamine + N-acetyl-D-6-sulfogalactosamine. Its activity is regulated as follows. Addition of GM2A stimulates the hydrolysis of sulfated glycosphingolipid SM2 and the ganglioside GM2. In terms of biological role, hydrolyzes the non-reducing end N-acetyl-D-hexosamine and/or sulfated N-acetyl-D-hexosamine of glycoconjugates, such as the oligosaccharide moieties from proteins and neutral glycolipids, or from certain mucopolysaccharides. The isozyme B does not hydrolyze each of these substrates, however hydrolyzes efficiently neutral oligosaccharide. Only the isozyme A is responsible for the degradation of GM2 gangliosides in the presence of GM2A. During fertilization is responsible, at least in part, for the zona block to polyspermy. Present in the cortical granules of non-activated oocytes, is exocytosed during the cortical reaction in response to oocyte activation and inactivates the sperm galactosyltransferase-binding site, accounting for the block in sperm binding to the zona pellucida. This Mus musculus (Mouse) protein is Beta-hexosaminidase subunit beta.